A 527-amino-acid chain; its full sequence is MKKRVQSELSKLSDKSIILEKPRDRQFGHYATPIAFSLAKELRRSPMQIADELAKSFESSSIFEKVEPIKGYVNFKLSESFLDEYATWALKNESEFGKDEQGETILLEFVSANPTGPLHIGHARGAVLGEALSRLGKHLGNEIVKEYYINDAGNQIYLLGLSIYLAAKEELGQEVQWPQEYYRGDYIKDLAKEAIEEFGKEAFSDESLIDKLSEWGKEKMMELIVSNLAAVDIKFDHFVSEKALYEKWDEVFAILKEHDAVYEKDSKVWLKSSEYGDEKDRVVVREDGRPTYLAGDIIYHYDKFKRGFDRYINIWGADHHGYIARVKAAIKFLGFDPDKLEVLLAQMVSLLKGGEPYKMSKRAGNFILMSEVVEEIGADALKFMFLSKKADTHLEFDVDMLKKEDASNPVYYINYAHARINSVLEKAGKSAGEVIDTPLKDLNEDAKDLLFEALILPEIIEDAFAKRELQRLTDYLKALAAQFHSFYNKHKVIGSEYEDRYLKLFLVVALSIRVGLRLLGIEAKKRM.

Residues A112 to H122 carry the 'HIGH' region motif.

Belongs to the class-I aminoacyl-tRNA synthetase family. As to quaternary structure, monomer.

It localises to the cytoplasm. The catalysed reaction is tRNA(Arg) + L-arginine + ATP = L-arginyl-tRNA(Arg) + AMP + diphosphate. In Nitratiruptor sp. (strain SB155-2), this protein is Arginine--tRNA ligase.